We begin with the raw amino-acid sequence, 258 residues long: Thiamine thiazole synthase (258 aa).

NAD(+) is bound by residues S36, E55–R56, G63, I127, and H153–D155. D155 and H170 together coordinate Fe cation. NAD(+) is bound at residue M224. R234 is a glycine binding site.

It belongs to the THI4 family. Homooctamer; tetramer of dimers. Requires Fe(2+) as cofactor.

The catalysed reaction is hydrogen sulfide + glycine + NAD(+) = ADP-5-ethyl-4-methylthiazole-2-carboxylate + nicotinamide + 3 H2O + H(+). The protein operates within cofactor biosynthesis; thiamine diphosphate biosynthesis. In terms of biological role, involved in the biosynthesis of the thiazole moiety of thiamine. Catalyzes the conversion of NAD and glycine to adenosine diphosphate 5-(2-hydroxyethyl)-4-methylthiazole-2-carboxylate (ADT), an adenylated thiazole intermediate, using free sulfide as a source of sulfur. The polypeptide is Thiamine thiazole synthase (Methanothermobacter thermautotrophicus (strain ATCC 29096 / DSM 1053 / JCM 10044 / NBRC 100330 / Delta H) (Methanobacterium thermoautotrophicum)).